The primary structure comprises 160 residues: MTKTEKTQIIETLTAEFKASSAIAVCDYKGLTVRQFEALRRAARDNGAKVQVVKNTLAGIALENADAKGLELKETNVFVWSDDQIALSKTIMKFAETSNEKFKVKFGYYEGSVVDAAHIETVSKLPSRDELIGMLLSVWTAPARYFVTALDNLKKQKEEN.

The protein belongs to the universal ribosomal protein uL10 family. In terms of assembly, part of the ribosomal stalk of the 50S ribosomal subunit. The N-terminus interacts with L11 and the large rRNA to form the base of the stalk. The C-terminus forms an elongated spine to which L12 dimers bind in a sequential fashion forming a multimeric L10(L12)X complex.

Its function is as follows. Forms part of the ribosomal stalk, playing a central role in the interaction of the ribosome with GTP-bound translation factors. This chain is Large ribosomal subunit protein uL10, found in Wolinella succinogenes (strain ATCC 29543 / DSM 1740 / CCUG 13145 / JCM 31913 / LMG 7466 / NCTC 11488 / FDC 602W) (Vibrio succinogenes).